Here is a 194-residue protein sequence, read N- to C-terminus: uncharacterized protein (194 aa).

Positions 45 to 138 (QLLGVPEQHR…AGPPRGDWGV (94 aa)) are disordered. Phosphoserine is present on residues Ser-69 and Ser-76. The span at 97–106 (PPLPPPPVLP) shows a compositional bias: pro residues. Over residues 107–116 (GPGEELPGAR) the composition is skewed to low complexity. The span at 117 to 128 (LPGGGGDDGAGR) shows a compositional bias: gly residues.

This is an uncharacterized protein from Homo sapiens (Human).